Here is a 471-residue protein sequence, read N- to C-terminus: Probable nucleoredoxin 3 (471 aa).

Thioredoxin domains are found at residues 15–173 (VSIP…ARRQ) and 179–334 (QLLG…KERD).

It belongs to the nucleoredoxin family.

The catalysed reaction is [protein]-dithiol + NAD(+) = [protein]-disulfide + NADH + H(+). The enzyme catalyses [protein]-dithiol + NADP(+) = [protein]-disulfide + NADPH + H(+). Functionally, probable thiol-disulfide oxidoreductase that may participate in various redox reactions. In Oryza sativa subsp. japonica (Rice), this protein is Probable nucleoredoxin 3.